The sequence spans 288 residues: Energy-coupling factor transporter ATP-binding protein EcfA2 (288 aa).

In terms of domain architecture, ABC transporter spans 3–243; the sequence is IVFEAVSHIY…RAELEAIGLG (241 aa). 40-47 lines the ATP pocket; the sequence is GPTGSGKS.

Belongs to the ABC transporter superfamily. Energy-coupling factor EcfA family. Forms a stable energy-coupling factor (ECF) transporter complex composed of 2 membrane-embedded substrate-binding proteins (S component), 2 ATP-binding proteins (A component) and 2 transmembrane proteins (T component).

Its subcellular location is the cell membrane. ATP-binding (A) component of a common energy-coupling factor (ECF) ABC-transporter complex. Unlike classic ABC transporters this ECF transporter provides the energy necessary to transport a number of different substrates. In Symbiobacterium thermophilum (strain DSM 24528 / JCM 14929 / IAM 14863 / T), this protein is Energy-coupling factor transporter ATP-binding protein EcfA2.